We begin with the raw amino-acid sequence, 258 residues long: Probable phthiotriol/phenolphthiotriol dimycocerosates methyltransferase 2 (258 aa).

It belongs to the methyltransferase superfamily. Phthiotriol/phenolphthiotriol dimycocerosates methyltransferase family.

In terms of biological role, catalyzes the methylation of the lipid moiety of the intermediate compounds phthiotriol and glycosylated phenolphthiotriol dimycoserosates to form phthiocerol dimycocerosates (DIM A) and glycosylated phenolphthiocerol dimycocerosates (PGL). The protein is Probable phthiotriol/phenolphthiotriol dimycocerosates methyltransferase 2 of Mycobacterium ulcerans (strain Agy99).